We begin with the raw amino-acid sequence, 673 residues long: Flotillin family inner membrane protein sll1021 (673 aa).

A helical membrane pass occupies residues 60 to 80 (LLFFPVVIIAVIFLILVTIFL). The disordered stretch occupies residues 639–673 (LQDPPSVSPPSAAVSEDDWPDLAPPTETNFSPEEI). A compositionally biased stretch (polar residues) spans 664 to 673 (TETNFSPEEI).

This sequence belongs to the band 7/mec-2 family. Flotillin subfamily. In terms of assembly, homooligomerizes.

Its subcellular location is the cell inner membrane. It localises to the membrane raft. Functionally, found in functional membrane microdomains (FMM) that may be equivalent to eukaryotic membrane rafts. FMMs are highly dynamic and increase in number as cells age. Flotillins are thought to be important factors in membrane fluidity. This chain is Flotillin family inner membrane protein sll1021, found in Synechocystis sp. (strain ATCC 27184 / PCC 6803 / Kazusa).